The following is a 509-amino-acid chain: Monocarboxylate transporter 9 (509 aa).

Topologically, residues 1 to 12 (MELKKSPDGGWG) are cytoplasmic. 12 helical membrane passes run 13–33 (WVIV…PLAV), 53–73 (WVGS…SLCV), 80–100 (PVTI…SFAP), 102–122 (IYFL…LLYT), 137–157 (GLAL…YAAL), 164–184 (FYGL…ILAC), 305–325 (VFSA…PPSL), 342–362 (IMPL…LLGI), 372–392 (LYLY…IPFA), 398–418 (LALL…FPYV), 433–453 (GILM…VGWF), and 462–482 (IAFY…LLAA). At 483–509 (LPSWDTCNKQLPKPAPTTFLYKVASNV) the chain is on the cytoplasmic side.

This sequence belongs to the major facilitator superfamily. Monocarboxylate porter (TC 2.A.1.13) family.

It is found in the cell membrane. It carries out the reaction creatine(in) = creatine(out). It catalyses the reaction (R)-carnitine(in) = (R)-carnitine(out). In terms of biological role, extracellular pH-and Na(+)-sensitive low-affinity creatine transporter. Also functions as a pH-independent carnitine efflux transporter. The polypeptide is Monocarboxylate transporter 9 (SLC16A9) (Pongo abelii (Sumatran orangutan)).